An 865-amino-acid polypeptide reads, in one-letter code: Protein translocase subunit SecA (865 aa).

ATP is bound by residues Gln93, 111–115 (GEGKT), and Asp501. Residues Cys841, Cys843, Cys852, and Cys853 each coordinate Zn(2+).

This sequence belongs to the SecA family. Monomer and homodimer. Part of the essential Sec protein translocation apparatus which comprises SecA, SecYEG and auxiliary proteins SecDF-YajC and YidC. Zn(2+) serves as cofactor.

Its subcellular location is the cell inner membrane. It localises to the cytoplasm. It catalyses the reaction ATP + H2O + cellular proteinSide 1 = ADP + phosphate + cellular proteinSide 2.. Its function is as follows. Part of the Sec protein translocase complex. Interacts with the SecYEG preprotein conducting channel. Has a central role in coupling the hydrolysis of ATP to the transfer of proteins into and across the cell membrane, serving as an ATP-driven molecular motor driving the stepwise translocation of polypeptide chains across the membrane. This Helicobacter pylori (strain J99 / ATCC 700824) (Campylobacter pylori J99) protein is Protein translocase subunit SecA.